We begin with the raw amino-acid sequence, 365 residues long: Chorismate synthase (365 aa).

Arg46 is a binding site for NADP(+). FMN contacts are provided by residues 123 to 125, 241 to 242, Gly281, 296 to 300, and Arg322; these read RSS, NG, and KPTPS.

The protein belongs to the chorismate synthase family. In terms of assembly, homotetramer. FMNH2 is required as a cofactor.

The catalysed reaction is 5-O-(1-carboxyvinyl)-3-phosphoshikimate = chorismate + phosphate. The protein operates within metabolic intermediate biosynthesis; chorismate biosynthesis; chorismate from D-erythrose 4-phosphate and phosphoenolpyruvate: step 7/7. Its function is as follows. Catalyzes the anti-1,4-elimination of the C-3 phosphate and the C-6 proR hydrogen from 5-enolpyruvylshikimate-3-phosphate (EPSP) to yield chorismate, which is the branch point compound that serves as the starting substrate for the three terminal pathways of aromatic amino acid biosynthesis. This reaction introduces a second double bond into the aromatic ring system. The protein is Chorismate synthase of Helicobacter pylori (strain Shi470).